The following is a 213-amino-acid chain: RNA polymerase I subunit H (213 aa).

Over residues 1–19 the composition is skewed to basic and acidic residues; that stretch reads MVERMKKDTGDETKTKVQE. The interval 1–70 is disordered; that stretch reads MVERMKKDTG…AREFTDKPWR (70 aa). The span at 21–31 shows a compositional bias: pro residues; it reads PPSPSPPPPPP. Composition is skewed to basic and acidic residues over residues 43–53 and 60–69; these read VPEREKKQIER and HAREFTDKPW.

As to expression, expressed during spermatogenesis, initially at pachytene stage with abundance increasing in round spermatids and decreasing again during spermatid elongation.

In terms of biological role, may be involved in male sterility. This is RNA polymerase I subunit H from Mus musculus (Mouse).